The chain runs to 282 residues: 40S small subunit processome assembly factor 1 (282 aa).

2 disordered regions span residues 27 to 98 and 121 to 143; these read YDLG…SEVP and FHSR…NKTK. Residues 48-59 show a composition bias toward basic and acidic residues; sequence KRDSETVADRAA. Residues Ser67 and Ser75 each carry the phosphoserine modification. Low complexity predominate over residues 89 to 98; the sequence is SAPAAPSEVP. Positions 131 to 143 are enriched in basic and acidic residues; it reads KSEEDKPAKNKTK. Residue Lys173 is modified to N6-acetyllysine. The span at 208-226 shows a compositional bias: basic and acidic residues; the sequence is EKRTSMEEEKRAAQETDIF. The segment at 208-254 is disordered; the sequence is EKRTSMEEEKRAAQETDIFKRKKRKGRSQEDRRSKKLAPSILSSGRA. Ser268 carries the post-translational modification Phosphoserine.

As to quaternary structure, part of the small subunit (SSU) processome, composed of more than 70 proteins and the RNA chaperone small nucleolar RNA (snoRNA) U3.

It localises to the chromosome. The protein resides in the nucleus. The protein localises to the nucleolus. Its function is as follows. Part of the small subunit (SSU) processome, first precursor of the small eukaryotic ribosomal subunit. During the assembly of the SSU processome in the nucleolus, many ribosome biogenesis factors, an RNA chaperone and ribosomal proteins associate with the nascent pre-rRNA and work in concert to generate RNA folding, modifications, rearrangements and cleavage as well as targeted degradation of pre-ribosomal RNA by the RNA exosome. Prevents helicase DHX37 to be recruited before post-A1 state. In Rattus norvegicus (Rat), this protein is 40S small subunit processome assembly factor 1.